Reading from the N-terminus, the 138-residue chain is ATP synthase epsilon chain (138 aa).

Belongs to the ATPase epsilon chain family. F-type ATPases have 2 components, CF(1) - the catalytic core - and CF(0) - the membrane proton channel. CF(1) has five subunits: alpha(3), beta(3), gamma(1), delta(1), epsilon(1). CF(0) has three main subunits: a, b and c.

It localises to the cell inner membrane. In terms of biological role, produces ATP from ADP in the presence of a proton gradient across the membrane. The polypeptide is ATP synthase epsilon chain (Psychrobacter cryohalolentis (strain ATCC BAA-1226 / DSM 17306 / VKM B-2378 / K5)).